Here is a 252-residue protein sequence, read N- to C-terminus: Probable anguibactin biosynthesis thioesterase AngT (252 aa).

Active-site residues include S92 and H229.

Belongs to the thioesterase family.

It functions in the pathway siderophore biosynthesis; anguibactin biosynthesis. Its function is as follows. Probable thioesterase. Involved in anguibactin production, but is not essential for virulence or iron transport gene expression. This is Probable anguibactin biosynthesis thioesterase AngT (angT) from Vibrio anguillarum (strain ATCC 68554 / 775) (Listonella anguillarum).